We begin with the raw amino-acid sequence, 165 residues long: Lipoprotein signal peptidase (165 aa).

3 helical membrane passes run 9 to 29 (FLAISFFVLIDWVSKLAVLLY), 69 to 89 (KYFLFAIRIAIILGILAFLFL), and 98 to 118 (IRFSLILLCSGAIGNVGDILF). Residues aspartate 124 and aspartate 142 contribute to the active site. A helical membrane pass occupies residues 133–153 (WYFPTFNFADIFISLGTFIFV).

Belongs to the peptidase A8 family.

Its subcellular location is the cell inner membrane. The catalysed reaction is Release of signal peptides from bacterial membrane prolipoproteins. Hydrolyzes -Xaa-Yaa-Zaa-|-(S,diacylglyceryl)Cys-, in which Xaa is hydrophobic (preferably Leu), and Yaa (Ala or Ser) and Zaa (Gly or Ala) have small, neutral side chains.. It participates in protein modification; lipoprotein biosynthesis (signal peptide cleavage). Functionally, this protein specifically catalyzes the removal of signal peptides from prolipoproteins. This chain is Lipoprotein signal peptidase, found in Chlamydia caviae (strain ATCC VR-813 / DSM 19441 / 03DC25 / GPIC) (Chlamydophila caviae).